A 66-amino-acid chain; its full sequence is Large ribosomal subunit protein uL29 (66 aa).

The protein belongs to the universal ribosomal protein uL29 family.

The sequence is that of Large ribosomal subunit protein uL29 from Brucella abortus (strain S19).